The chain runs to 170 residues: Translation machinery-associated protein 16 homolog (170 aa).

It belongs to the TMA16 family.

The chain is Translation machinery-associated protein 16 homolog from Dictyostelium discoideum (Social amoeba).